Consider the following 295-residue polypeptide: 4-diphosphocytidyl-2-C-methyl-D-erythritol kinase (295 aa).

Residue lysine 15 is part of the active site. ATP is bound at residue 102–112 (PIASGVGGGSS). The active site involves aspartate 144.

This sequence belongs to the GHMP kinase family. IspE subfamily.

The enzyme catalyses 4-CDP-2-C-methyl-D-erythritol + ATP = 4-CDP-2-C-methyl-D-erythritol 2-phosphate + ADP + H(+). It functions in the pathway isoprenoid biosynthesis; isopentenyl diphosphate biosynthesis via DXP pathway; isopentenyl diphosphate from 1-deoxy-D-xylulose 5-phosphate: step 3/6. In terms of biological role, catalyzes the phosphorylation of the position 2 hydroxy group of 4-diphosphocytidyl-2C-methyl-D-erythritol. The sequence is that of 4-diphosphocytidyl-2-C-methyl-D-erythritol kinase from Mesorhizobium japonicum (strain LMG 29417 / CECT 9101 / MAFF 303099) (Mesorhizobium loti (strain MAFF 303099)).